Consider the following 341-residue polypeptide: Major histocompatibility complex class I-related protein 1 (341 aa).

The N-terminal stretch at 1–18 is a signal peptide; it reads MMLLLPLLAVFLVKRSHT. Residues 19-105 form an alpha-1 region; the sequence is RTHSLRYFRL…RHLQRHYNHS (87 aa). The segment at 19–197 is antigen-binding cleft; it reads RTHSLRYFRL…EYGRDTLERT (179 aa). The Extracellular portion of the chain corresponds to 19 to 296; it reads RTHSLRYFRL…APRESGDILR (278 aa). 2 residues coordinate 8-(9H-purin-6-yl)-2-oxa-8-azabicyclo[3.3.1]nona-3,6-diene-4,6-dicarbaldehyde: Tyr25 and Arg27. Positions 27, 42, and 61 each coordinate 5-(2-oxoethylideneamino)-6-(D-ribitylamino)uracil. 3 residues coordinate 5-(2-oxopropylideneamino)-6-(D-ribitylamino)uracil: Arg27, Ser42, and Lys61. 7-hydroxy-6-methyl-8-(1-D-ribityl)lumazine is bound by residues Arg27, Ser42, and Lys61. Positions 61 and 76 each coordinate 8-(9H-purin-6-yl)-2-oxa-8-azabicyclo[3.3.1]nona-3,6-diene-4,6-dicarbaldehyde. Lys61 lines the 2-amino-4-oxopteridine-6-carbaldehyde pocket. Lys61 lines the pyridoxal pocket. An N-linked (GlcNAc...) asparagine glycan is attached at Asn103. The alpha-2 stretch occupies residues 106-197; sequence GLHTYQRMIG…EYGRDTLERT (92 aa). An 8-(9H-purin-6-yl)-2-oxa-8-azabicyclo[3.3.1]nona-3,6-diene-4,6-dicarbaldehyde-binding site is contributed by Arg112. 3 residues coordinate 5-(2-oxoethylideneamino)-6-(D-ribitylamino)uracil: Arg112, Tyr170, and Gln171. 3 residues coordinate 5-(2-oxopropylideneamino)-6-(D-ribitylamino)uracil: Arg112, Tyr170, and Gln171. 7-hydroxy-6-methyl-8-(1-D-ribityl)lumazine is bound by residues Arg112, Tyr170, and Gln171. 2 cysteine pairs are disulfide-bonded: Cys116–Cys179 and Cys218–Cys274. Residues 198-289 are alpha-3; that stretch reads EHPVVRTTRK…GRQMVLEAPR (92 aa). In terms of domain architecture, Ig-like C1-type spans 200–301; that stretch reads PVVRTTRKET…GDILRVSTIS (102 aa). The tract at residues 290-296 is connecting peptide; that stretch reads ESGDILR. A helical transmembrane segment spans residues 297-317; sequence VSTISGTTILIIALAGVGVLI. Residues 318–341 lie on the Cytoplasmic side of the membrane; it reads WRRSQELKEVMYQPTQVNEGSSPS.

The protein belongs to the MHC class I family. As to quaternary structure, heterotrimer that consists of MR1, B2M and metabolite antigen. Major classes of metabolite ligands presented by MR1 include riboflavin-related antigens, pyrimidines and ribityl lumazines, nucleobase adducts and folate derivatives. Forms reversible covalent Schiff base complexes with microbial pyrimidine-based metabolite, which serves as a molecular switch triggering complete folding, stable association with B2M and translocation of the ternary complex from endoplasmic reticulum to the plasma membrane. Alternatively, forms non-Schiff base complexes with ribityl lumazines. On antigen-presenting cells, the ternary complex interacts with TCR on MR1-restricted CD4- or CD8-positive T cell subsets. Interacts with TAPBP and TAPBPL chaperones in the endoplasmic reticulum. TAPBP associated or not with MHC class I peptide loading complex binds ligand-free MR1 or MR1-B2M complex, providing for stable MR1 pools ready for metabolite antigen processing. TAPBPL interacts with MR1 in a ligand-independent way; this interaction may stabilize MR1 pool and facilitate ligand loading and dissociation. Structurally, MR1-B2M heterodimer adopts a topology similar to classical MHC class I molecules, with alpha-1 and alpha-2 domains of MR1 forming the antigen-binding cleft composed of two alpha-helices resting on a floor of 7-stranded anti-parallel beta-pleated sheet. Post-translationally, N-glycosylated. Highly expressed thymus. Expressed in liver, kidney, spleen, heart, brain, lung, skeletal muscle and testis.

Its subcellular location is the cell membrane. It is found in the endoplasmic reticulum membrane. The protein resides in the golgi apparatus membrane. It localises to the early endosome membrane. The protein localises to the late endosome membrane. In terms of biological role, antigen-presenting molecule specialized in displaying microbial pyrimidine-based metabolites to alpha-beta T cell receptors (TCR) on innate-type mucosal-associated invariant T (MAIT) cells. In complex with B2M preferentially presents riboflavin-derived metabolites to semi-invariant TRAV1 TCRs on MAIT cells, guiding immune surveillance of the microbial metabolome at mucosal epithelial barriers. Signature pyrimidine-based microbial antigens are generated via non-enzymatic condensation of metabolite intermediates of the riboflavin pathway with by-products arising from other metabolic pathways such as glycolysis. Typical potent antigenic metabolites are 5-(2-oxoethylideneamino)-6-D-ribitylaminouracil (5-OE-RU) and 5-(2-oxopropylideneamino)-6-D-ribitylaminouracil (5-OP-RU), products of condensation of 5-amino-6-D-ribityaminouracil (5-A-RU) with glyoxal or methylglyoxal by-products, respectively. May present microbial antigens to various TRAV1-negative MAIT cell subsets, providing for unique recognition of diverse microbes, including pathogens that do not synthesize riboflavin. Upon antigen recognition, elicits rapid innate-type MAIT cell activation to eliminate pathogenic microbes by directly killing infected cells. During T cell development, drives thymic selection and post-thymic terminal differentiation of MAIT cells in a process dependent on commensal microflora. Acts as an immune sensor of cancer cell metabolome. May present a tumor-specific or -associated metabolite essential for cancer cell survival to a pan-cancer TCR on a non-MAIT CD8-positive T cell clone, triggering T cell-mediated killing of a wide range of cancer cell types. May present tumor-enriched pyridoxal and pyridoxal 5'-phosphate antigens, enabling preferential recognition of cancer cells. Presents nucleobase carbonyl adducts generated during oxidative stress. Captures M3Ade, a nucleobase adduct composed of one adenine modified by a malondialdehyde trimer, for recognition by MR1-restricted T cell clones expressing a polyclonal TCR repertoire. The protein is Major histocompatibility complex class I-related protein 1 of Mus musculus (Mouse).